A 160-amino-acid polypeptide reads, in one-letter code: Ribonuclease H (160 aa).

In terms of domain architecture, RNase H type-1 spans 5 to 146; that stretch reads PGGLVEIWTD…VDQLATAARE (142 aa). Aspartate 14, glutamate 52, aspartate 74, and aspartate 138 together coordinate Mg(2+).

The protein belongs to the RNase H family. In terms of assembly, monomer. Mg(2+) serves as cofactor.

The protein localises to the cytoplasm. The catalysed reaction is Endonucleolytic cleavage to 5'-phosphomonoester.. Its function is as follows. Endonuclease that specifically degrades the RNA of RNA-DNA hybrids. In Acidiphilium cryptum (strain JF-5), this protein is Ribonuclease H.